The following is a 97-amino-acid chain: Putative CC-type chemokine U83 (97 aa).

2 disulfide bridges follow: cysteine 32–cysteine 62 and cysteine 33–cysteine 76.

Belongs to the intercrine beta (chemokine CC) family. Highly divergent.

The sequence is that of Putative CC-type chemokine U83 (U83) from Human herpesvirus 6A (strain Uganda-1102) (HHV-6 variant A).